The chain runs to 488 residues: Probable glycine dehydrogenase (decarboxylating) subunit 2 (488 aa).

An N6-(pyridoxal phosphate)lysine modification is found at K274.

This sequence belongs to the GcvP family. C-terminal subunit subfamily. The glycine cleavage system is composed of four proteins: P, T, L and H. In this organism, the P 'protein' is a heterodimer of two subunits. It depends on pyridoxal 5'-phosphate as a cofactor.

The enzyme catalyses N(6)-[(R)-lipoyl]-L-lysyl-[glycine-cleavage complex H protein] + glycine + H(+) = N(6)-[(R)-S(8)-aminomethyldihydrolipoyl]-L-lysyl-[glycine-cleavage complex H protein] + CO2. Its function is as follows. The glycine cleavage system catalyzes the degradation of glycine. The P protein binds the alpha-amino group of glycine through its pyridoxal phosphate cofactor; CO(2) is released and the remaining methylamine moiety is then transferred to the lipoamide cofactor of the H protein. This chain is Probable glycine dehydrogenase (decarboxylating) subunit 2, found in Listeria monocytogenes serotype 4a (strain HCC23).